A 263-amino-acid chain; its full sequence is Ribosomal RNA small subunit methyltransferase A (263 aa).

The S-adenosyl-L-methionine site is built by asparagine 20, leucine 22, glycine 47, glutamate 68, aspartate 90, and asparagine 111.

Belongs to the class I-like SAM-binding methyltransferase superfamily. rRNA adenine N(6)-methyltransferase family. RsmA subfamily.

The protein resides in the cytoplasm. The enzyme catalyses adenosine(1518)/adenosine(1519) in 16S rRNA + 4 S-adenosyl-L-methionine = N(6)-dimethyladenosine(1518)/N(6)-dimethyladenosine(1519) in 16S rRNA + 4 S-adenosyl-L-homocysteine + 4 H(+). Functionally, specifically dimethylates two adjacent adenosines (A1518 and A1519) in the loop of a conserved hairpin near the 3'-end of 16S rRNA in the 30S particle. May play a critical role in biogenesis of 30S subunits. In Chlorobium chlorochromatii (strain CaD3), this protein is Ribosomal RNA small subunit methyltransferase A.